Reading from the N-terminus, the 1011-residue chain is CRM-domain containing factor CFM2, chloroplastic (1011 aa).

Residues 1–45 constitute a chloroplast transit peptide; it reads MLLPLFHQQPLILAKTFPDRIFPPFLVPNTLVSRRNVSRANSGIF. Residues 77–90 are compositionally biased toward basic and acidic residues; that stretch reads HDSPTRRITGEESG. The segment at 77–96 is disordered; the sequence is HDSPTRRITGEESGKNSPGE. 3 CRM domains span residues 164–260, 376–473, and 577–677; these read LTLP…YFVS, PKLT…AVSS, and EGIT…QCLR. 2 disordered regions span residues 721–810 and 841–872; these read DSAT…GNSL and LNAN…DGLV. Positions 722–736 are enriched in polar residues; the sequence is SATNETWSDGESSNM. Positions 743 to 757 are enriched in basic and acidic residues; the sequence is ENQHTEPEKAREKIE. The segment covering 762-771 has biased composition (polar residues); sequence SDLSVPSSGE. Acidic residues predominate over residues 772 to 782; the sequence is ENWEDDSEGEV. The span at 849–859 shows a compositional bias: polar residues; the sequence is GSSTGSGSQIS. The 100-residue stretch at 873–972 folds into the CRM 4 domain; sequence TDLSNRERLI…WGAEEEMKSF (100 aa).

As to quaternary structure, interacts with RNA. Part of large ribonucleo-protein particles that contain CAF1 and/or CAF2.

It localises to the plastid. Its subcellular location is the chloroplast stroma. Its function is as follows. Binds specific group II introns in chloroplasts and facilitates their splicing. Acts on both subgroup IIA and subgroup IIB introns. The substrates of the subgroup IIB also require the CRM domain proteins CAF1 or CAF2, with a simultaneous binding of CFM2 and CAF1 or CAF2. Can bind to and promote the splicing of the single group I intron in chloroplast tRNA transcript of trnL-UAA gene. The sequence is that of CRM-domain containing factor CFM2, chloroplastic from Arabidopsis thaliana (Mouse-ear cress).